We begin with the raw amino-acid sequence, 848 residues long: MTPGKHSGASARAANGGAWGYRDFRGGQKKGWCTTPQLVATMPVSPAGSHKQQNFGLNNATQPKKSISFFATMKATSVKGYTGANQSRMAVSKTVLIPPELKTVEKPNPNIKTTQVFDINGTDVTPRPLYHPDPLTGTAKPSKLLTSQEGSLGSEFISSYSLYQNTINPSTLGQFTRSVLGSSTVSKSSVSASESIAEDLEEPSYKRERLTSFTDLQVIRAAPEKIVTKEDLEKNIEIILTETETLRFFDLPTVMVSVESEEAEKVTQRNKNYEVLCRNRLGNDLYVERMMQTFNGAPKNKDVQCDKIIMEDKGIMSTAWDLYDSYNAMELVSLSVKQSVVESSSKANVLPKDQDQRLPGSTTEKNSETSSLMDIENVILAKIHEDEEDHSDAILKSDKFHQDLFFMERVLMENIFQPKLAAYRQLPVLKEPEPEEPEDVLESAKHEEVEEESKKEEEEEIHAEESTIPANLERLWSFSCDLTKGLNVSSLAWNKTNPDLLAVGYGHFGFKEQKRGLACCWSIKNPMWPERIYQSPYGVTAVDFSIGAPNLLAVGYHNGTIAIYNVRSNSNVPVLDSSESPQKHLGPVWQLQWIEQDRGTTGDGKREILVSISADGRISKWVIRKGLDCYDLMRLKRTTAASNKKGGEKEKKDEALISRQAPGMCFAFHPKDTNIYLAGTEEGHIHKCSCSYNEQYLDTYRGHKGPVYKVTWNPFCHDVFLSCSADWGVIIWQQENVKPSLSFYPATSVVYDVAWSPKSSYIFAAANENRVEIWDLHISTLDPLIVNTANPGIKFTTILFAKQTDCLLVGDSDGQVSVYELRNMPTVLETGRGDIMDTLLGSKSNQSA.

2 disordered regions span residues 345-370 (SKANVLPKDQDQRLPGSTTEKNSETS) and 431-464 (EPEPEEPEDVLESAKHEEVEEESKKEEEEEIHAE). A compositionally biased stretch (polar residues) spans 359–370 (PGSTTEKNSETS). Basic and acidic residues predominate over residues 442 to 456 (ESAKHEEVEEESKKE). WD repeat units follow at residues 534–574 (QSPY…NVPV), 583–631 (KHLG…DCYD), 658–698 (SRQA…QYLD), 702–742 (GHKG…PSLS), 745–784 (PATSVVYDVAWSPKSSYIFAAANENRVEIWDLHISTLDPL), and 790–829 (NPGIKFTTILFAKQTDCLLVGDSDGQVSVYELRNMPTVLE).

In terms of assembly, part of the multisubunit axonemal dynein complex formed at least of two heavy chains and a number of intermediate and light chains. Associated with axonemal dynein subunits such as, DNAH2, DNAI3, and DYNLT1. Interacts with DYNLT1.

It is found in the cytoplasm. Its subcellular location is the cytoskeleton. The protein localises to the flagellum axoneme. It localises to the cilium axoneme. The protein resides in the dynein axonemal particle. In terms of biological role, plays a critical role in the assembly of axonemal dynein complex, thereby playing a role in ciliary motility. The protein is Dynein axonemal intermediate chain 4 of Homo sapiens (Human).